The sequence spans 202 residues: Proteasome subunit beta 1 (202 aa).

A propeptide (removed in mature form; by autocatalysis) is located at residue Met1. The active-site Nucleophile is Thr2.

This sequence belongs to the peptidase T1B family. As to quaternary structure, the 20S proteasome core is composed of 14 alpha and 14 beta subunits that assemble into four stacked heptameric rings, resulting in a barrel-shaped structure. The two inner rings, each composed of seven catalytic beta subunits, are sandwiched by two outer rings, each composed of seven alpha subunits. The catalytic chamber with the active sites is on the inside of the barrel. Has a gated structure, the ends of the cylinder being occluded by the N-termini of the alpha-subunits. Is capped at one or both ends by the proteasome regulatory ATPase, PAN.

Its subcellular location is the cytoplasm. It carries out the reaction Cleavage of peptide bonds with very broad specificity.. With respect to regulation, the formation of the proteasomal ATPase PAN-20S proteasome complex, via the docking of the C-termini of PAN into the intersubunit pockets in the alpha-rings, triggers opening of the gate for substrate entry. Interconversion between the open-gate and close-gate conformations leads to a dynamic regulation of the 20S proteasome proteolysis activity. In terms of biological role, component of the proteasome core, a large protease complex with broad specificity involved in protein degradation. This chain is Proteasome subunit beta 1, found in Pyrobaculum arsenaticum (strain DSM 13514 / JCM 11321 / PZ6).